We begin with the raw amino-acid sequence, 296 residues long: Bifunctional protein FolD (296 aa).

Residues 168–170, serine 197, and threonine 238 each bind NADP(+); that span reads GRS.

This sequence belongs to the tetrahydrofolate dehydrogenase/cyclohydrolase family. Homodimer.

The catalysed reaction is (6R)-5,10-methylene-5,6,7,8-tetrahydrofolate + NADP(+) = (6R)-5,10-methenyltetrahydrofolate + NADPH. It carries out the reaction (6R)-5,10-methenyltetrahydrofolate + H2O = (6R)-10-formyltetrahydrofolate + H(+). It functions in the pathway one-carbon metabolism; tetrahydrofolate interconversion. Functionally, catalyzes the oxidation of 5,10-methylenetetrahydrofolate to 5,10-methenyltetrahydrofolate and then the hydrolysis of 5,10-methenyltetrahydrofolate to 10-formyltetrahydrofolate. This chain is Bifunctional protein FolD, found in Porphyromonas gingivalis (strain ATCC BAA-308 / W83).